A 236-amino-acid polypeptide reads, in one-letter code: Carboxymethylenebutenolidase (236 aa).

Catalysis depends on residues Cys123, Asp171, and His202.

It belongs to the dienelactone hydrolase family. Monomer.

It catalyses the reaction 2-(5-oxo-2,5-dihydrofuran-2-ylidene)acetate + H2O = 4-oxohex-2-enedioate + H(+). It participates in aromatic compound metabolism; 3-chlorocatechol degradation. Its function is as follows. Ring cleavage of cyclic ester dienelactone to produce maleylacetate. The protein is Carboxymethylenebutenolidase (clcD) of Pseudomonas knackmussii (strain DSM 6978 / CCUG 54928 / LMG 23759 / B13).